Reading from the N-terminus, the 891-residue chain is MTDRLASLRAISASAKSMMSIAAARGAQPTAPIQTAPVHFDPLPTPYLDGIRARLTEVKLPPKALKSALNSYDQACARWRYSLDESFSQAARSVSPHNLHLLSTLRFRLYTEQVERWAVQVLQVAEQWRAEMEKQRAHIAASTDKSKKPRPKFHSEYTPLLELYFRFNAYPTYADRRVLAEKTGMLTRQITVWFQNHRRRAKGPLPRMTPTAKIPLEEFERERENLARKLLPMLLPPHLRPITLGNNKTPDLTTSSRARALPPAKEDKPPQVTRKTSKKVPKTAHPAPSTLVAPSQDTVMADAISTKKTKKAKSKQCADIEMKDSSKPKRRKMKKLPKGVVGTADVAMCIDPPQVPKKNKVKPKKSMAFDSQAELAFAQAAYPSPSKYAWVHTRKPQTDAPKAKASSVTSDVARLGKGRPGKPSPPASSTVPSRRVSTRLNAMRPPYAFPARYDSAAVPMTFAVAQVTKFTFATDSASFGFKPRISTRRPNITSDAMSQLVSSFERLRLLSVELSVSRNPPLPAFEHQRLVDLRVEGLTSGEVTALHFTPGAYAARLAVTYIPPRAPLPSTVLDLPRALRARLVHPMVLPETVTQPDAFAPFIALAERRARRKARKEKKRQEEKQAKKDKKERKKAGLPHRAPSTVDAPDVSSRASSLDSDVSTSARKSSKKSKRQPSSSSRASSVASSGRTPSLSSTSSRRSSGMSMPSTPGPEQSLPIVAASDFALGGEEDVSMDADLMAQLFGSDENADAVGYDLPMHPEPFTADMITFTSCADGALGDMTADVNMPNLGQSSIDDMNWTASVGSNAQDPASQESGGDEASHWLDISFDRPTTTSQINVLGGTYSCELGGSDNMNAPLDFSDLTFGLDTGADYFSGFNNTIGGTTIMV.

The segment at residues 146–205 (SKKPRPKFHSEYTPLLELYFRFNAYPTYADRRVLAEKTGMLTRQITVWFQNHRRRAKGPL) is a DNA-binding region (homeobox). Disordered stretches follow at residues 241–291 (PITL…PSTL), 319–339 (DIEM…LPKG), 393–437 (TRKP…RRVS), 610–718 (ARRK…EQSL), and 800–822 (MNWT…GGDE). Over residues 244–257 (LGNNKTPDLTTSSR) the composition is skewed to polar residues. Positions 328–337 (PKRRKMKKLP) are enriched in basic residues. Residues 427-437 (ASSTVPSRRVS) are compositionally biased toward low complexity. A compositionally biased stretch (basic residues) spans 627–638 (KKDKKERKKAGL). 2 stretches are compositionally biased toward low complexity: residues 651 to 667 (VSSR…TSAR) and 676 to 710 (QPSS…SMPS). Residues 800–818 (MNWTASVGSNAQDPASQES) are compositionally biased toward polar residues.

The protein localises to the nucleus. Its function is as follows. Specifies A-alpha-1 mating-type. May regulate the expression of genes specific to the homokaryotic cell type. This Schizophyllum commune (Split gill fungus) protein is Mating-type protein A-alpha Y1.